A 258-amino-acid polypeptide reads, in one-letter code: Thiazole synthase (258 aa).

The active-site Schiff-base intermediate with DXP is lysine 97. 1-deoxy-D-xylulose 5-phosphate is bound by residues glycine 158, 184–185 (AG), and 206–207 (NT).

This sequence belongs to the ThiG family. As to quaternary structure, homotetramer. Forms heterodimers with either ThiH or ThiS.

Its subcellular location is the cytoplasm. It carries out the reaction [ThiS sulfur-carrier protein]-C-terminal-Gly-aminoethanethioate + 2-iminoacetate + 1-deoxy-D-xylulose 5-phosphate = [ThiS sulfur-carrier protein]-C-terminal Gly-Gly + 2-[(2R,5Z)-2-carboxy-4-methylthiazol-5(2H)-ylidene]ethyl phosphate + 2 H2O + H(+). Its pathway is cofactor biosynthesis; thiamine diphosphate biosynthesis. In terms of biological role, catalyzes the rearrangement of 1-deoxy-D-xylulose 5-phosphate (DXP) to produce the thiazole phosphate moiety of thiamine. Sulfur is provided by the thiocarboxylate moiety of the carrier protein ThiS. In vitro, sulfur can be provided by H(2)S. In Marinomonas sp. (strain MWYL1), this protein is Thiazole synthase.